Reading from the N-terminus, the 338-residue chain is Ribosomal RNA small subunit methyltransferase H (338 aa).

S-adenosyl-L-methionine-binding positions include 46–48 (GGY), aspartate 63, phenylalanine 90, aspartate 106, and glutamine 113.

The protein belongs to the methyltransferase superfamily. RsmH family.

It is found in the cytoplasm. The catalysed reaction is cytidine(1402) in 16S rRNA + S-adenosyl-L-methionine = N(4)-methylcytidine(1402) in 16S rRNA + S-adenosyl-L-homocysteine + H(+). Its function is as follows. Specifically methylates the N4 position of cytidine in position 1402 (C1402) of 16S rRNA. The protein is Ribosomal RNA small subunit methyltransferase H of Mesorhizobium japonicum (strain LMG 29417 / CECT 9101 / MAFF 303099) (Mesorhizobium loti (strain MAFF 303099)).